The primary structure comprises 220 residues: Iron-sulfur cluster repair protein YtfE (220 aa).

Belongs to the RIC family. YtfE subfamily. Homodimer.

The protein localises to the cytoplasm. Functionally, di-iron-containing protein involved in the repair of iron-sulfur clusters damaged by oxidative and nitrosative stress conditions. This chain is Iron-sulfur cluster repair protein YtfE, found in Escherichia coli O157:H7.